Consider the following 903-residue polypeptide: Glutamate receptor ionotropic, NMDA 1 (903 aa).

An N-terminal signal peptide occupies residues 1 to 20; the sequence is MGTMRLFLLAVLFLFSFARA. The Extracellular portion of the chain corresponds to 21-557; sequence GCDPKIVNIG…TLDSFMQPFQ (537 aa). N-linked (GlcNAc...) asparagine glycans are attached at residues Asn-61, Asn-203, Asn-276, Asn-300, Asn-350, Asn-368, Asn-440, Asn-469, and Asn-489. Cys-79 and Cys-308 are oxidised to a cystine. Intrachain disulfides connect Cys-420–Cys-452 and Cys-436–Cys-453. Positions 514, 516, and 521 each coordinate glycine. Residues 558–578 form a helical membrane-spanning segment; the sequence is STLWLLVGLSVHVVAVMLYLL. The Cytoplasmic segment spans residues 579-600; sequence DRFSPFGRFKVNSEEEEEDALT. The tract at residues 601-620 is pore-forming; sequence LSSAMWFSWGVLLNSGIGEG. The segment at residues 601-622 is an intramembrane region (discontinuously helical); the sequence is LSSAMWFSWGVLLNSGIGEGAP. The Cytoplasmic segment spans residues 623–628; that stretch reads RSFSAR. Residues 629–645 form a helical membrane-spanning segment; that stretch reads ILGMVWAGFAMIIVASY. At 646 to 810 the chain is on the extracellular side; that stretch reads TANLAAFLVL…NAPATLTFEN (165 aa). Residues Ser-686 and Asp-730 each coordinate glycine. A disulfide bond links Cys-742 and Cys-796. Asn-769 carries an N-linked (GlcNAc...) asparagine glycan. The chain crosses the membrane as a helical span at residues 811–831; it reads MAGVFMLVAGGIVAGIFLIFI. At 832 to 903 the chain is on the cytoplasmic side; that stretch reads EIAYKRHKDA…SSKDTVNVVV (72 aa).

Belongs to the glutamate-gated ion channel (TC 1.A.10.1) family. NR1/GRIN1 subfamily. As to quaternary structure, heterotetramer; the NMDAR subunits are modular and harbor tiered domains that function in concert to regulate opening and closing of the cation-selective ion channel pore. Forms heterotetrameric channels composed of two GluN1/zeta subunits (GRIN1), and two identical GluN2/epsilon subunits (GRIN2A, GRIN2B, GRIN2C or GRIN2D) or GluN3 subunits (GRIN3A or GRIN3B) (in vitro). Does not form functional channels by itself. Can also form heterotetrameric channels that contain at least two GluN1 subunits and at least two different GluN2 subunits (or a combination of one GluN2 and one GluN3 subunits) (in vitro). In vivo, the subunit composition may vary in function of the expression levels of the different subunits.

It localises to the cell membrane. The protein resides in the postsynaptic cell membrane. Its subcellular location is the postsynaptic density membrane. It is found in the synaptic cell membrane. The catalysed reaction is Ca(2+)(in) = Ca(2+)(out). It catalyses the reaction Na(+)(in) = Na(+)(out). It carries out the reaction K(+)(in) = K(+)(out). NMDA glutamate receptor activity is modulated by zinc ions. The NMDA glutamate receptor activity of the heterotetramer with grin2b is stimulated by micromolar levels of Zn(2+). The NMDA glutamate receptor activity of the heterotetramer with grin2a is inhibited by nanomolar levels of Zn(2+). In terms of biological role, component of N-methyl-D-aspartate (NMDA) receptors (NMDARs) that function as heterotetrameric, ligand-gated cation channels with high calcium permeability and voltage-dependent block by Mg(2+). NMDARs participate in synaptic plasticity. Channel activation requires binding of the neurotransmitter L-glutamate to the GluN2 subunit, glycine binding to the GluN1 subunit, plus membrane depolarization to eliminate channel inhibition by Mg(2+). NMDARs mediate simultaneously the potasium efflux and the influx of calcium and sodium. Each GluN2 or GluN3 subunit confers differential attributes to channel properties, including activation, deactivation and desensitization kinetics, pH sensitivity, Ca2(+) permeability, and binding to allosteric modulators. This chain is Glutamate receptor ionotropic, NMDA 1, found in Xenopus laevis (African clawed frog).